The primary structure comprises 382 residues: Bifunctional enzyme IspD/IspF (382 aa).

Positions 1-225 are 2-C-methyl-D-erythritol 4-phosphate cytidylyltransferase; it reads MTFSVVIVAA…EHLAGVARVT (225 aa). Positions 226–382 are 2-C-methyl-D-erythritol 2,4-cyclodiphosphate synthase; that stretch reads RVGQGFDAHR…SAVVAVETPA (157 aa). Residues aspartate 232 and histidine 234 each contribute to the a divalent metal cation site. 4-CDP-2-C-methyl-D-erythritol 2-phosphate-binding positions include 232 to 234 and 258 to 259; these read DAH and HS. Residue histidine 266 coordinates a divalent metal cation. 4-CDP-2-C-methyl-D-erythritol 2-phosphate-binding positions include 280 to 282, 356 to 359, phenylalanine 363, and arginine 366; these read DIG and TTTE.

The protein in the N-terminal section; belongs to the IspD/TarI cytidylyltransferase family. IspD subfamily. This sequence in the C-terminal section; belongs to the IspF family. A divalent metal cation serves as cofactor.

The catalysed reaction is 2-C-methyl-D-erythritol 4-phosphate + CTP + H(+) = 4-CDP-2-C-methyl-D-erythritol + diphosphate. It catalyses the reaction 4-CDP-2-C-methyl-D-erythritol 2-phosphate = 2-C-methyl-D-erythritol 2,4-cyclic diphosphate + CMP. The protein operates within isoprenoid biosynthesis; isopentenyl diphosphate biosynthesis via DXP pathway; isopentenyl diphosphate from 1-deoxy-D-xylulose 5-phosphate: step 2/6. It functions in the pathway isoprenoid biosynthesis; isopentenyl diphosphate biosynthesis via DXP pathway; isopentenyl diphosphate from 1-deoxy-D-xylulose 5-phosphate: step 4/6. Bifunctional enzyme that catalyzes the formation of 4-diphosphocytidyl-2-C-methyl-D-erythritol from CTP and 2-C-methyl-D-erythritol 4-phosphate (MEP) (IspD), and catalyzes the conversion of 4-diphosphocytidyl-2-C-methyl-D-erythritol 2-phosphate (CDP-ME2P) to 2-C-methyl-D-erythritol 2,4-cyclodiphosphate (ME-CPP) with a corresponding release of cytidine 5-monophosphate (CMP) (IspF). This is Bifunctional enzyme IspD/IspF from Caulobacter vibrioides (strain ATCC 19089 / CIP 103742 / CB 15) (Caulobacter crescentus).